Consider the following 525-residue polypeptide: Light-independent protochlorophyllide reductase subunit B (525 aa).

D36 is a binding site for [4Fe-4S] cluster. Catalysis depends on D292, which acts as the Proton donor. 428–429 (GL) is a binding site for substrate. Positions 447-470 (PSASSENGSAPLSAGTATPAAAPE) are disordered. Low complexity predominate over residues 460–470 (AGTATPAAAPE).

Belongs to the ChlB/BchB/BchZ family. In terms of assembly, protochlorophyllide reductase is composed of three subunits; BchL, BchN and BchB. Forms a heterotetramer of two BchB and two BchN subunits. [4Fe-4S] cluster is required as a cofactor.

The catalysed reaction is chlorophyllide a + oxidized 2[4Fe-4S]-[ferredoxin] + 2 ADP + 2 phosphate = protochlorophyllide a + reduced 2[4Fe-4S]-[ferredoxin] + 2 ATP + 2 H2O. It participates in porphyrin-containing compound metabolism; bacteriochlorophyll biosynthesis (light-independent). Its function is as follows. Component of the dark-operative protochlorophyllide reductase (DPOR) that uses Mg-ATP and reduced ferredoxin to reduce ring D of protochlorophyllide (Pchlide) to form chlorophyllide a (Chlide). This reaction is light-independent. The NB-protein (BchN-BchB) is the catalytic component of the complex. The chain is Light-independent protochlorophyllide reductase subunit B from Chlorobium luteolum (strain DSM 273 / BCRC 81028 / 2530) (Pelodictyon luteolum).